The sequence spans 424 residues: CinA-like protein (424 aa).

It belongs to the CinA family.

The protein is CinA-like protein of Shewanella baltica (strain OS155 / ATCC BAA-1091).